We begin with the raw amino-acid sequence, 491 residues long: Allene oxide synthase 3 (491 aa).

Residues Lys-104, His-135, and Lys-139 each contribute to the heme b site. 2 residues coordinate (13S)-hydroperoxy-(9Z,11E)-octadecadienoate: Asn-296 and Lys-302. Asn-296 provides a ligand contact to (13S)-hydroperoxy-(9Z,11E,15Z)-octadecatrienoate. Residues Lys-442 and Cys-444 each coordinate heme b.

Belongs to the cytochrome P450 family. Heme b serves as cofactor. In terms of tissue distribution, expressed in roots. Not detected in aerial tissues, including cotyledons, leaves, stems and flower buds.

The catalysed reaction is (13S)-hydroperoxy-(9Z,11E,15Z)-octadecatrienoate = (9Z,13S,15Z)-12,13-epoxyoctadeca-9,11,15-trienoate + H2O. It catalyses the reaction (13S)-hydroperoxy-(9Z,11E)-octadecadienoate = (9Z,13S)-12,13-epoxyoctadeca-9,11-dienoate + H2O. The enzyme catalyses (9Z,13S,15Z)-12,13-epoxyoctadeca-9,11,15-trienoate = (9S,13S,15Z)-12-oxophyto-10,15-dienoate. Cytochrome P450 metabolizing both 13- and 9-hydroperoxides of linoleic and linolenic acids, but with a marked preference for 9-hydroperoxy fatty acids. Catalyzes not only the synthesis of allene oxide, but also its hydrolysis and cyclization. The first step is the synthesis of (12Z)-9,10-epoxyoctadeca-10,12-dienoic acid (9,10-EOD) and the final products are (9R)-alpha-ketol and the racemic cis-10-oxo-11-phytoenoic acid. The cyclase activity possesses regiospecificity and (9Z)-12,13-epoxyoctadeca-9,11-dienoic acid (12,13-EOD) is significantly less efficient as a substrate for cyclopentenone production than 9,10-EOD. Has no hydroperoxide lyase activity. May play a defensive role against soil-borne pests that affect roots or juvenile tissues as they emerge from the germinating seed. This Solanum lycopersicum (Tomato) protein is Allene oxide synthase 3.